A 557-amino-acid polypeptide reads, in one-letter code: Protein PNS1 (557 aa).

Positions 1–58 are disordered; the sequence is MSTEKQYQPQQPPPAYTGQGPDNGNAYGYPESYGKTETHSGDSCSGDTSMNPQQQGQQ. Topologically, residues 1–99 are cytoplasmic; it reads MSTEKQYQPQ…DNNKPKFNDW (99 aa). Residues 41–58 are compositionally biased toward polar residues; sequence GDSCSGDTSMNPQQQGQQ. The chain crosses the membrane as a helical span at residues 100–120; sequence PFIIVFLLTLCGFIVVASLTL. At 121 to 147 the chain is on the extracellular side; sequence RAWSQTYSSTGSGIYHDFDTGTLNTNS. A helical transmembrane segment spans residues 148–168; that stretch reads VILLVFSVVIAIFFAFIGIVL. Residues 169-174 lie on the Cytoplasmic side of the membrane; sequence CRAYPK. The chain crosses the membrane as a helical span at residues 175 to 195; sequence FFIYAGMIVNILAALGTAIMY. The Extracellular portion of the chain corresponds to 196–200; sequence MSLKY. Residues 201 to 221 traverse the membrane as a helical segment; it reads WSAGIVFLIFTFMTAWCYWGM. Over 222-246 the chain is Cytoplasmic; it reads RSRIPLTVAILRVIVLAMKNCPQSL. The helical transmembrane segment at 247–267 threads the bilayer; sequence FVSFFGTIVASAFAMLFSTVV. Over 268–292 the chain is Extracellular; that stretch reads VATYMKYDPSNTNSGCNVSGGDCSH. Residue Asn284 is glycosylated (N-linked (GlcNAc...) asparagine). The helical transmembrane segment at 293–313 threads the bilayer; the sequence is AKLIGVLVVVFFCGYYISEVI. At 314-350 the chain is on the cytoplasmic side; sequence RNVMHCTVSGVFGSWYYRYKSDQGMPKWPAMGAFKRA. The helical transmembrane segment at 351–371 threads the bilayer; sequence MTYSFGSICFGSLIVSIIETF. Residues 372–393 lie on the Extracellular side of the membrane; that stretch reads RQLLQLGKQAAIASTDNANWIR. A helical transmembrane segment spans residues 394–414; it reads IIFWLIDMLVGFIQWIAQYFN. At 415 to 454 the chain is on the cytoplasmic side; sequence HYAYCIIALYGKPYLKAAKQTWYMFREKGIDALINDNLVN. The chain crosses the membrane as a helical span at residues 455–475; that stretch reads VALGFYSLFASYMSCLFAFLY. Residues 476–488 lie on the Extracellular side of the membrane; it reads LRFTKPGYNSDGD. Residues 489–509 traverse the membrane as a helical segment; the sequence is FNAPLMAFAFVIALQLTNIAN. Topologically, residues 510–557 are cytoplasmic; that stretch reads ETIRSGCATFFTALGHDPEVFQAQYPDRFDEIFRSYPQVLNKLTHQDV.

The protein belongs to the CTL (choline transporter-like) family.

Its subcellular location is the cell membrane. Functionally, probably involved in transport through the plasma membrane. The protein is Protein PNS1 (PNS1) of Candida glabrata (strain ATCC 2001 / BCRC 20586 / JCM 3761 / NBRC 0622 / NRRL Y-65 / CBS 138) (Yeast).